A 318-amino-acid chain; its full sequence is 4-diphosphocytidyl-2-C-methyl-D-erythritol kinase (318 aa).

K25 is a catalytic residue. 110-120 (PVAGGMAGGSA) lines the ATP pocket. The active site involves D152.

This sequence belongs to the GHMP kinase family. IspE subfamily.

It catalyses the reaction 4-CDP-2-C-methyl-D-erythritol + ATP = 4-CDP-2-C-methyl-D-erythritol 2-phosphate + ADP + H(+). It participates in isoprenoid biosynthesis; isopentenyl diphosphate biosynthesis via DXP pathway; isopentenyl diphosphate from 1-deoxy-D-xylulose 5-phosphate: step 3/6. Functionally, catalyzes the phosphorylation of the position 2 hydroxy group of 4-diphosphocytidyl-2C-methyl-D-erythritol. This is 4-diphosphocytidyl-2-C-methyl-D-erythritol kinase from Mycobacterium tuberculosis (strain ATCC 25177 / H37Ra).